The chain runs to 27 residues: Endoglucanase gh5 (27 aa).

Residue E6 is the Nucleophile of the active site.

The enzyme catalyses Endohydrolysis of (1-&gt;4)-beta-D-glucosidic linkages in cellulose, lichenin and cereal beta-D-glucans.. With respect to regulation, activity is stimulated by zinc ions, potassium ions and DTT. Activity is inhibited by manganese and chloride ions. Its function is as follows. Endoglucanase (EG) that cleaves the internal beta-1,4-glucosidic bonds in cellulose. The polypeptide is Endoglucanase gh5 (Fomes meliae (Fomitopsis meliae)).